Here is an 87-residue protein sequence, read N- to C-terminus: HssA/B-like protein 57 (87 aa).

Belongs to the hssA/B family.

The sequence is that of HssA/B-like protein 57 (hssl57) from Dictyostelium discoideum (Social amoeba).